The chain runs to 1036 residues: Serine/threonine-protein kinase ULK2 (1036 aa).

Residues 9 to 271 (YSKRDLVGHG…FEAFFSHPFL (263 aa)) form the Protein kinase domain. ATP is bound by residues 15 to 23 (VGHGAFAVV) and Lys39. Catalysis depends on Asp131, which acts as the Proton acceptor. Disordered regions lie at residues 319–348 (ENLSSPPLGPPNYLQVSKDSASTSSKNSSC), 418–460 (TSTA…ADTA), 491–522 (CCCGHPQGHDSRSRNSSGSPVPQAQSPQSLLS), 540–588 (QKLR…SSDW), and 656–695 (AEQQSKAVFGRSVSTGKLSDQQGKTPICRHQGSTDSLNTE). A compositionally biased stretch (low complexity) spans 335-348 (SKDSASTSSKNSSC). The span at 418-428 (TSTASSGTNVH) shows a compositional bias: polar residues. Phosphoserine is present on Ser430. The segment covering 504–521 (RNSSGSPVPQAQSPQSLL) has biased composition (polar residues). Over residues 659–679 (QSKAVFGRSVSTGKLSDQQGK) the composition is skewed to polar residues. 2 positions are modified to phosphoserine: Ser771 and Ser780. A CTD-like region region spans residues 812-1036 (ELPEETLMER…SALCHSTATV (225 aa)).

Belongs to the protein kinase superfamily. Ser/Thr protein kinase family. APG1/unc-51/ULK1 subfamily. As to quaternary structure, interacts with SYNGAP1. Component of a complex consisting of ATG13/KIAA0652, ULK1 and RB1CC1/FIP200. Interacts (via C-terminus) with ATG13/KIAA0652. Associates with the mammalian target of rapamycin complex 1 (mTORC1) through an interaction with RPTOR. In terms of processing, autophosphorylated. In response to nutrient limitation, probably phosphorylated and activated by AMPK, leading to activate autophagy.

The protein localises to the cytoplasmic vesicle membrane. The catalysed reaction is L-seryl-[protein] + ATP = O-phospho-L-seryl-[protein] + ADP + H(+). The enzyme catalyses L-threonyl-[protein] + ATP = O-phospho-L-threonyl-[protein] + ADP + H(+). Functionally, serine/threonine-protein kinase involved in autophagy in response to starvation. Acts upstream of phosphatidylinositol 3-kinase PIK3C3 to regulate the formation of autophagophores, the precursors of autophagosomes. Part of regulatory feedback loops in autophagy: acts both as a downstream effector and a negative regulator of mammalian target of rapamycin complex 1 (mTORC1) via interaction with RPTOR. Activated via phosphorylation by AMPK, also acts as a negative regulator of AMPK through phosphorylation of the AMPK subunits PRKAA1, PRKAB2 and PRKAG1. May phosphorylate ATG13/KIAA0652, FRS2, FRS3 and RPTOR; however such data need additional evidences. Not involved in ammonia-induced autophagy or in autophagic response of cerebellar granule neurons (CGN) to low potassium concentration. Plays a role early in neuronal differentiation and is required for granule cell axon formation: may govern axon formation via Ras-like GTPase signaling and through regulation of the Rab5-mediated endocytic pathways within developing axons. The polypeptide is Serine/threonine-protein kinase ULK2 (ULK2) (Homo sapiens (Human)).